The sequence spans 348 residues: Dihydroorotase (348 aa).

2 residues coordinate Zn(2+): His17 and His19. Substrate-binding positions include 19–21 (HLR) and Asn45. Zn(2+) contacts are provided by Lys103, His140, and His178. The residue at position 103 (Lys103) is an N6-carboxylysine. A substrate-binding site is contributed by His140. Position 223 (Leu223) interacts with substrate. Asp251 lines the Zn(2+) pocket. Residue Asp251 is part of the active site. Substrate contacts are provided by His255 and Ala267.

Belongs to the metallo-dependent hydrolases superfamily. DHOase family. Class II DHOase subfamily. Homodimer. Zn(2+) serves as cofactor.

It carries out the reaction (S)-dihydroorotate + H2O = N-carbamoyl-L-aspartate + H(+). It participates in pyrimidine metabolism; UMP biosynthesis via de novo pathway; (S)-dihydroorotate from bicarbonate: step 3/3. Catalyzes the reversible cyclization of carbamoyl aspartate to dihydroorotate. The polypeptide is Dihydroorotase (Salmonella paratyphi B (strain ATCC BAA-1250 / SPB7)).